A 273-amino-acid chain; its full sequence is Ribosomal RNA small subunit methyltransferase A (273 aa).

Residues N25, L27, G52, E73, D99, and N118 each coordinate S-adenosyl-L-methionine.

It belongs to the class I-like SAM-binding methyltransferase superfamily. rRNA adenine N(6)-methyltransferase family. RsmA subfamily.

It is found in the cytoplasm. The enzyme catalyses adenosine(1518)/adenosine(1519) in 16S rRNA + 4 S-adenosyl-L-methionine = N(6)-dimethyladenosine(1518)/N(6)-dimethyladenosine(1519) in 16S rRNA + 4 S-adenosyl-L-homocysteine + 4 H(+). Functionally, specifically dimethylates two adjacent adenosines (A1518 and A1519) in the loop of a conserved hairpin near the 3'-end of 16S rRNA in the 30S particle. May play a critical role in biogenesis of 30S subunits. The sequence is that of Ribosomal RNA small subunit methyltransferase A from Novosphingobium aromaticivorans (strain ATCC 700278 / DSM 12444 / CCUG 56034 / CIP 105152 / NBRC 16084 / F199).